The chain runs to 513 residues: MTLEKFVDALPIPDTLKPVQQSKEKTYYEVTMEECTHQLHRDLPPTRLWGYNGLFPGPTIEVKRNENVYVKWMNNLPSTHFLPIDHTIHHSDSQHEEPEVKTVVHLHGGVTPDDSDGYPEAWFSKDFEQTGPYFKREVYHYPNQQRGAILWYHDHAMALTRLNVYAGLVGAYIIHDPKEKRLKLPSDEYDVPLLITDRTINEDGSLFYPSAPENPSPSLPNPSIVPAFCGETILVNGKVWPYLEVEPRKYRFRVINASNTRTYNLSLDNGGDFIQIGSDGGLLPRSVKLNSFSLAPAERYDIIIDFTAYEGESIILANSAGCGGDVNPETDANIMQFRVTKPLAQKDESRKPKYLASYPSVQHERIQNIRTLKLAGTQDEYGRPVLLLNNKRWHDPVTETPKVGTTEIWSIINPTRGTHPIHLHLVSFRVLDRRPFDIARYQESGELSYTGPAVPPPPSEKGWKDTIQAHAGEVLRIAATFGPYSGRYVWHCHILEHEDYDMMRPMDITDPHK.

Plastocyanin-like domains follow at residues 45-81, 101-178, 240-318, and 378-509; these read PTRL…STHF, KTVV…HDPK, WPYL…ILAN, and QDEY…MDIT. Residues His-105, His-107, His-153, and His-155 each coordinate Cu cation. The Cu cation site is built by His-419, His-422, His-424, His-491, Cys-492, His-493, His-497, and Met-502.

This sequence belongs to the multicopper oxidase family. As to quaternary structure, monomer. Cu(2+) is required as a cofactor.

It is found in the spore coat. The catalysed reaction is 4 hydroquinone + O2 = 4 benzosemiquinone + 2 H2O. The enzyme catalyses 2 (4Z,15Z)-bilirubin IXalpha + O2 = 2 biliverdin IXalpha + 2 H2O. Inhibited by azide. Functionally, multicopper oxidase that catalyzes the oxidation of a variety of substrates, including phenolic and non-phenolic compounds. Substrates include syringaldazine (SGZ), 2,6-dimethoxyphenol (2,6-DMP) and the non-phenolic compound 2,2'-azino-bis(3-ethylbenzothiazoline-6-sulfonic acid) (ABTS). Has no tyrosinase activity. Is implicated in the biosynthesis of a brownish pigment that characterizes sporulating colonies of B.subtilis, and which appears to be a melanin-like product and to confer protection against UV light. Its function is as follows. In vitro, also shows strong bilirubin oxidase (BOD) activity, and can catalyze the oxidation of free bilirubin (UB), direct bilirubin (conjugated with glucuronic acid, DB) and ditaurobilirubin. This is Laccase from Bacillus subtilis (strain 168).